The following is a 45-amino-acid chain: Putative purine permease 9 (45 aa).

Not detected in seedlings, leaves, embryos or root and shoot meristems.

This Arabidopsis thaliana (Mouse-ear cress) protein is Putative purine permease 9.